The sequence spans 418 residues: Protein fuzzy homolog (418 aa).

The protein belongs to the fuzzy family. As to quaternary structure, component of the CPLANE (ciliogenesis and planar polarity effectors) complex, composed of INTU, FUZ and WDPCP. Interacts with CPLANE2. Interacts with CPLANE1.

It localises to the cytoplasm. The protein resides in the cytoskeleton. The protein localises to the cilium basal body. In terms of biological role, probable planar cell polarity effector involved in cilium biogenesis. May regulate protein and membrane transport to the cilium. Proposed to function as core component of the CPLANE (ciliogenesis and planar polarity effectors) complex involved in the recruitment of peripheral IFT-A proteins to basal bodies. May regulate the morphogenesis of hair follicles which depends on functional primary cilia. Binds phosphatidylinositol 3-phosphate with highest affinity, followed by phosphatidylinositol 4-phosphate and phosphatidylinositol 5-phosphate. The protein is Protein fuzzy homolog (FUZ) of Homo sapiens (Human).